The sequence spans 793 residues: DnaJ homolog subfamily C member 10 (793 aa).

An N-terminal signal peptide occupies residues 1 to 32 (MGVWLNKDDYIRDLKRIILCFLIVYMAILVGT). Residues 35–100 (DFYSLLGVSK…DLRKKYDKYG (66 aa)) enclose the J domain. The Thioredoxin 1 domain occupies 130 to 232 (EIITLERREF…ESLVSFAMQH (103 aa)). An intrachain disulfide couples cysteine 158 to cysteine 161. Trxb stretches follow at residues 235 to 350 (STVT…LPDF) and 348 to 463 (PDFE…PQNF). 3 consecutive Thioredoxin domains span residues 454 to 553 (HVTT…IEDL), 557 to 662 (SVVS…SLRI), and 671 to 778 (VSTD…ISEK). An intrachain disulfide couples cysteine 480 to cysteine 483. Residue asparagine 530 is glycosylated (N-linked (GlcNAc...) asparagine). 2 disulfide bridges follow: cysteine 588–cysteine 591 and cysteine 700–cysteine 703. A Prevents secretion from ER motif is present at residues 790–793 (KDEL).

As to quaternary structure, interacts with EDEM1. Interacts with HSPA5 (via its J domain).

It is found in the endoplasmic reticulum lumen. In terms of biological role, endoplasmic reticulum disulfide reductase involved both in the correct folding of proteins and degradation of misfolded proteins. Required for efficient folding of proteins in the endoplasmic reticulum by catalyzing the removal of non-native disulfide bonds formed during the folding of proteins, such as LDLR. Also involved in endoplasmic reticulum-associated degradation (ERAD) by reducing incorrect disulfide bonds in misfolded glycoproteins recognized by EDEM1. Interaction with HSPA5 is required its activity, not for the disulfide reductase activity, but to facilitate the release of DNAJC10 from its substrate. Promotes apoptotic signaling pathway in response to endoplasmic reticulum stress. The polypeptide is DnaJ homolog subfamily C member 10 (DNAJC10) (Homo sapiens (Human)).